A 424-amino-acid polypeptide reads, in one-letter code: UDP-N-acetylglucosamine 1-carboxyvinyltransferase (424 aa).

Position 22–23 (22–23 (KN)) interacts with phosphoenolpyruvate. Arg-93 contributes to the UDP-N-acetyl-alpha-D-glucosamine binding site. The Proton donor role is filled by Cys-117. Residue Cys-117 is modified to 2-(S-cysteinyl)pyruvic acid O-phosphothioketal. UDP-N-acetyl-alpha-D-glucosamine is bound by residues 122–126 (RPVDL), 162–165 (KVSV), Asp-307, and Ile-329.

This sequence belongs to the EPSP synthase family. MurA subfamily.

Its subcellular location is the cytoplasm. It carries out the reaction phosphoenolpyruvate + UDP-N-acetyl-alpha-D-glucosamine = UDP-N-acetyl-3-O-(1-carboxyvinyl)-alpha-D-glucosamine + phosphate. Its pathway is cell wall biogenesis; peptidoglycan biosynthesis. Its function is as follows. Cell wall formation. Adds enolpyruvyl to UDP-N-acetylglucosamine. This Haemophilus influenzae (strain 86-028NP) protein is UDP-N-acetylglucosamine 1-carboxyvinyltransferase.